We begin with the raw amino-acid sequence, 904 residues long: Conserved oligomeric Golgi complex subunit 2 (904 aa).

2 disordered regions span residues 384–424 (KEKQ…INNN) and 644–669 (IKIT…LNNK). 2 stretches are compositionally biased toward low complexity: residues 388 to 424 (SNNN…INNN) and 652 to 663 (PSLSNQSPISSS).

The protein belongs to the COG2 family. Component of the conserved oligomeric Golgi complex which is composed of eight different subunits and is required for normal Golgi morphology and localization.

The protein localises to the golgi apparatus membrane. In terms of biological role, required for normal Golgi function. The chain is Conserved oligomeric Golgi complex subunit 2 (cog2) from Dictyostelium discoideum (Social amoeba).